We begin with the raw amino-acid sequence, 154 residues long: 6,7-dimethyl-8-ribityllumazine synthase (154 aa).

5-amino-6-(D-ribitylamino)uracil-binding positions include F22, 56–58 (AFE), and 81–83 (VLI). Residue 86–87 (ET) participates in (2S)-2-hydroxy-3-oxobutyl phosphate binding. The Proton donor role is filled by H89. A 5-amino-6-(D-ribitylamino)uracil-binding site is contributed by L114. (2S)-2-hydroxy-3-oxobutyl phosphate is bound at residue R128.

It belongs to the DMRL synthase family.

The catalysed reaction is (2S)-2-hydroxy-3-oxobutyl phosphate + 5-amino-6-(D-ribitylamino)uracil = 6,7-dimethyl-8-(1-D-ribityl)lumazine + phosphate + 2 H2O + H(+). Its pathway is cofactor biosynthesis; riboflavin biosynthesis; riboflavin from 2-hydroxy-3-oxobutyl phosphate and 5-amino-6-(D-ribitylamino)uracil: step 1/2. Its function is as follows. Catalyzes the formation of 6,7-dimethyl-8-ribityllumazine by condensation of 5-amino-6-(D-ribitylamino)uracil with 3,4-dihydroxy-2-butanone 4-phosphate. This is the penultimate step in the biosynthesis of riboflavin. The chain is 6,7-dimethyl-8-ribityllumazine synthase from Chlamydia pneumoniae (Chlamydophila pneumoniae).